A 98-amino-acid polypeptide reads, in one-letter code: Large ribosomal subunit protein mL53 (98 aa).

It belongs to the mitochondrion-specific ribosomal protein mL53 family. Component of the mitochondrial large ribosomal subunit (mt-LSU). Mature N.crassa 74S mitochondrial ribosomes consist of a small (37S) and a large (54S) subunit. The 37S small subunit contains a 16S ribosomal RNA (16S mt-rRNA) and 32 different proteins. The 54S large subunit contains a 23S rRNA (23S mt-rRNA) and 42 different proteins.

It localises to the mitochondrion. In terms of biological role, component of the mitochondrial ribosome (mitoribosome), a dedicated translation machinery responsible for the synthesis of mitochondrial genome-encoded proteins, including at least some of the essential transmembrane subunits of the mitochondrial respiratory chain. The mitoribosomes are attached to the mitochondrial inner membrane and translation products are cotranslationally integrated into the membrane. The polypeptide is Large ribosomal subunit protein mL53 (mrpl44) (Neurospora crassa (strain ATCC 24698 / 74-OR23-1A / CBS 708.71 / DSM 1257 / FGSC 987)).